The primary structure comprises 261 residues: uncharacterized protein (261 aa).

The disordered stretch occupies residues 1-22 (MGVADNEYISVPTGEPVQQQPQ). 3 helical membrane passes run 92 to 112 (IIILFFSQQFLLFSIAPILGL), 122 to 142 (IVVMHFLTAAFYYIFSVIFLF), and 147 to 167 (INTILLSILFSIIFTLSLMNY).

The protein localises to the membrane. This is an uncharacterized protein from Dictyostelium discoideum (Social amoeba).